The chain runs to 145 residues: D-aminoacyl-tRNA deacylase (145 aa).

A Gly-cisPro motif, important for rejection of L-amino acids motif is present at residues 137 to 138 (GP).

This sequence belongs to the DTD family. Homodimer.

The protein resides in the cytoplasm. It carries out the reaction glycyl-tRNA(Ala) + H2O = tRNA(Ala) + glycine + H(+). The enzyme catalyses a D-aminoacyl-tRNA + H2O = a tRNA + a D-alpha-amino acid + H(+). An aminoacyl-tRNA editing enzyme that deacylates mischarged D-aminoacyl-tRNAs. Also deacylates mischarged glycyl-tRNA(Ala), protecting cells against glycine mischarging by AlaRS. Acts via tRNA-based rather than protein-based catalysis; rejects L-amino acids rather than detecting D-amino acids in the active site. By recycling D-aminoacyl-tRNA to D-amino acids and free tRNA molecules, this enzyme counteracts the toxicity associated with the formation of D-aminoacyl-tRNA entities in vivo and helps enforce protein L-homochirality. In Photobacterium profundum (strain SS9), this protein is D-aminoacyl-tRNA deacylase.